Consider the following 398-residue polypeptide: uncharacterized protein (398 aa).

The next 2 membrane-spanning stretches (helical) occupy residues 31 to 51 (VVFS…CLLF) and 56 to 76 (AFIT…FFGC).

Belongs to the chlamydial CPn_0129/CT_036/TC_0306 family.

It localises to the cell membrane. This is an uncharacterized protein from Chlamydia muridarum (strain MoPn / Nigg).